We begin with the raw amino-acid sequence, 63 residues long: Hirudin (63 aa).

Residues valine 1 to tyrosine 3 are interaction with thrombin active site. Cystine bridges form between cysteine 6–cysteine 14, cysteine 16–cysteine 28, and cysteine 22–cysteine 39. The interval cysteine 39–leucine 63 is disordered. An O-linked (GalNAc...) threonine glycan is attached at threonine 45. Residues aspartate 55 to leucine 63 form an interaction with fibrinogen-binding exosite of thrombin region. Tyrosine 62 bears the Sulfotyrosine mark.

This sequence belongs to the protease inhibitor I14 (hirudin) family.

It is found in the secreted. Hirudin is a potent thrombin-specific protease inhibitor. It forms a stable non-covalent complex with alpha-thrombin, thereby abolishing its ability to cleave fibrinogen. This chain is Hirudin, found in Poecilobdella viridis (Indian freshwater leech).